Consider the following 90-residue polypeptide: Large ribosomal subunit protein bL27 (90 aa).

The tract at residues 1-22 is disordered; it reads MAHKKAGGSTRNGRDSNPKMLG.

Belongs to the bacterial ribosomal protein bL27 family.

This chain is Large ribosomal subunit protein bL27, found in Coxiella burnetii (strain CbuK_Q154) (Coxiella burnetii (strain Q154)).